Reading from the N-terminus, the 375-residue chain is Glutamate 5-kinase (375 aa).

K17 serves as a coordination point for ATP. Positions 57, 144, and 156 each coordinate substrate. 176 to 177 (TD) lines the ATP pocket. Residues 283–361 (KGELILDTGA…DEIEGILGYV (79 aa)) form the PUA domain.

Belongs to the glutamate 5-kinase family.

The protein localises to the cytoplasm. It carries out the reaction L-glutamate + ATP = L-glutamyl 5-phosphate + ADP. The protein operates within amino-acid biosynthesis; L-proline biosynthesis; L-glutamate 5-semialdehyde from L-glutamate: step 1/2. Functionally, catalyzes the transfer of a phosphate group to glutamate to form L-glutamate 5-phosphate. In Thioalkalivibrio sulfidiphilus (strain HL-EbGR7), this protein is Glutamate 5-kinase.